The sequence spans 126 residues: Glycine--tRNA ligase beta subunit (126 aa).

This sequence belongs to the class-II aminoacyl-tRNA synthetase family. As to quaternary structure, tetramer of two alpha and two beta subunits.

Its subcellular location is the cytoplasm. The catalysed reaction is tRNA(Gly) + glycine + ATP = glycyl-tRNA(Gly) + AMP + diphosphate. This is Glycine--tRNA ligase beta subunit (glyS) from Neisseria gonorrhoeae.